Reading from the N-terminus, the 403-residue chain is Flavohemoprotein (403 aa).

In terms of domain architecture, Globin spans 1 to 138 (MLTPEQKAIV…LADLMIGIEK (138 aa)). H85 provides a ligand contact to heme b. Residues Y95 and E137 each act as charge relay system in the active site. The tract at residues 149 to 403 (GGWRDFRPFR…SQSFAPVILG (255 aa)) is reductase. Residues 152-257 (RDFRPFRVAR…HVPAGDFVLQ (106 aa)) enclose the FAD-binding FR-type domain. FAD is bound by residues Y190 and 206 to 209 (RQYS). 269–274 (GVGITP) contacts NADP(+). Residue 390-393 (TFGP) participates in FAD binding.

The protein belongs to the globin family. Two-domain flavohemoproteins subfamily. In the C-terminal section; belongs to the flavoprotein pyridine nucleotide cytochrome reductase family. Requires heme b as cofactor. It depends on FAD as a cofactor.

It carries out the reaction 2 nitric oxide + NADPH + 2 O2 = 2 nitrate + NADP(+) + H(+). It catalyses the reaction 2 nitric oxide + NADH + 2 O2 = 2 nitrate + NAD(+) + H(+). The polypeptide is Flavohemoprotein (Deinococcus radiodurans (strain ATCC 13939 / DSM 20539 / JCM 16871 / CCUG 27074 / LMG 4051 / NBRC 15346 / NCIMB 9279 / VKM B-1422 / R1)).